The following is an 859-amino-acid chain: Leucine--tRNA ligase (859 aa).

The 'HIGH' region signature appears at 42-52 (PYPSGRLHMGH). Residues 618 to 622 (KMSKS) carry the 'KMSKS' region motif. Lys621 contributes to the ATP binding site.

This sequence belongs to the class-I aminoacyl-tRNA synthetase family.

Its subcellular location is the cytoplasm. The catalysed reaction is tRNA(Leu) + L-leucine + ATP = L-leucyl-tRNA(Leu) + AMP + diphosphate. This is Leucine--tRNA ligase from Shewanella sp. (strain MR-7).